A 245-amino-acid polypeptide reads, in one-letter code: Probable phosphatase YcdX (245 aa).

Zn(2+)-binding residues include His-7, His-9, His-15, His-40, Glu-73, His-101, His-131, Asp-192, and His-194.

It belongs to the PHP family. Homotrimer. It depends on Zn(2+) as a cofactor.

This is Probable phosphatase YcdX from Escherichia coli (strain K12 / MC4100 / BW2952).